Here is a 583-residue protein sequence, read N- to C-terminus: Chromosomal replication initiator protein DnaA (583 aa).

Residues 1-91 form a domain I, interacts with DnaA modulators region; it reads MSNSNFSIEE…KHVLKTRLDL (91 aa). The tract at residues 91-241 is domain II; that stretch reads LSVSLAITST…SFNDGLDGES (151 aa). Residues 151–239 are disordered; sequence KAEQRDGASQ…SSSFNDGLDG (89 aa). Over residues 172 to 182 the composition is skewed to basic and acidic residues; sequence EAARRREHDAD. A domain III, AAA+ region region spans residues 242 to 458; it reads LLNKNYTFEN…GALIRVTAYC (217 aa). G286, G288, K289, and T290 together coordinate ATP. The interval 459-583 is domain IV, binds dsDNA; sequence ALSHEPLTVE…TQKIKSHARD (125 aa).

Belongs to the DnaA family. Oligomerizes as a right-handed, spiral filament on DNA at oriC.

The protein localises to the cytoplasm. Its function is as follows. Plays an essential role in the initiation and regulation of chromosomal replication. ATP-DnaA binds to the origin of replication (oriC) to initiate formation of the DNA replication initiation complex once per cell cycle. Binds the DnaA box (a 9 base pair repeat at the origin) and separates the double-stranded (ds)DNA. Forms a right-handed helical filament on oriC DNA; dsDNA binds to the exterior of the filament while single-stranded (ss)DNA is stabiized in the filament's interior. The ATP-DnaA-oriC complex binds and stabilizes one strand of the AT-rich DNA unwinding element (DUE), permitting loading of DNA polymerase. After initiation quickly degrades to an ADP-DnaA complex that is not apt for DNA replication. Binds acidic phospholipids. This chain is Chromosomal replication initiator protein DnaA, found in Corynebacterium jeikeium (strain K411).